Consider the following 451-residue polypeptide: 1,3-beta-glucanosyltransferase PGA4 (451 aa).

Residues 1-18 (MLFRSLVTYLSLVSSVLS) form the signal peptide. Tyrosine 81 lines the (1,3-beta-D-glucosyl)n pocket. The N-linked (GlcNAc...) asparagine glycan is linked to asparagine 88. (1,3-beta-D-glucosyl)n is bound by residues 108–116 (NTPHSSITR), asparagine 151, glutamate 152, and arginine 198. Glutamate 152 serves as the catalytic Proton donor. Residue asparagine 245 is glycosylated (N-linked (GlcNAc...) asparagine). Glutamate 254 serves as the catalytic Nucleophile. Tyrosine 286 contacts (1,3-beta-D-glucosyl)n. Positions 316–336 (SQFEKTKNPSGDGGYLKSTGG) are disordered. 3 N-linked (GlcNAc...) asparagine glycosylation sites follow: asparagine 347, asparagine 394, and asparagine 422. The tract at residues 395-427 (YTSSITASSRASPSQTSQVSSSSATSANSTSSK) is disordered. A compositionally biased stretch (low complexity) spans 396–426 (TSSITASSRASPSQTSQVSSSSATSANSTSS). Aspartate 430 carries the GPI-anchor amidated aspartate lipid modification. The propeptide at 431-451 (AAVEGAGFLSVIALAAGIALL) is removed in mature form.

This sequence belongs to the glycosyl hydrolase 72 family. Post-translationally, the GPI-anchor is attached to the protein in the endoplasmic reticulum and serves to target the protein to the cell surface. There, the glucosamine-inositol phospholipid moiety is cleaved off and the GPI-modified mannoprotein is covalently attached via its lipidless GPI glycan remnant to the 1,6-beta-glucan of the outer cell wall layer.

Its subcellular location is the secreted. The protein localises to the cell wall. It localises to the membrane. Functionally, splits internally a 1,3-beta-glucan molecule and transfers the newly generated reducing end (the donor) to the non-reducing end of another 1,3-beta-glucan molecule (the acceptor) forming a 1,3-beta linkage, resulting in the elongation of 1,3-beta-glucan chains in the cell wall. Involved in cell wall biosynthesis and morphogenesis. Plays a key role in virulence. This is 1,3-beta-glucanosyltransferase PGA4 (PGA4) from Candida albicans (strain SC5314 / ATCC MYA-2876) (Yeast).